Reading from the N-terminus, the 336-residue chain is Eukaryotic translation initiation factor 3 subunit I (336 aa).

WD repeat units lie at residues 8-47 (GHER…RLGT), 50-91 (GHLG…KVWE), 146-185 (CTES…QLEN), 190-229 (EFDH…ILKT), and 287-326 (GHFG…FDFM).

Belongs to the eIF-3 subunit I family. As to quaternary structure, component of the eukaryotic translation initiation factor 3 (eIF-3) complex.

It is found in the cytoplasm. Functionally, component of the eukaryotic translation initiation factor 3 (eIF-3) complex, which is involved in protein synthesis of a specialized repertoire of mRNAs and, together with other initiation factors, stimulates binding of mRNA and methionyl-tRNAi to the 40S ribosome. The eIF-3 complex specifically targets and initiates translation of a subset of mRNAs involved in cell proliferation. The protein is Eukaryotic translation initiation factor 3 subunit I (tif34) of Emericella nidulans (strain FGSC A4 / ATCC 38163 / CBS 112.46 / NRRL 194 / M139) (Aspergillus nidulans).